We begin with the raw amino-acid sequence, 35 residues long: MPRRRRRASRPVRRRRRARRSTAVRRRRRVVRRRR.

Residues 1-35 (MPRRRRRASRPVRRRRRARRSTAVRRRRRVVRRRR) form a disordered region. A phosphoserine mark is found at Ser9 and Ser21.

Post-translationally, phosphorylated in immature sperm. Dephosphorylated in mature sperm allowing a stronger interaction with DNA. In terms of tissue distribution, gonads.

It localises to the nucleus. The protein resides in the chromosome. In terms of biological role, protamines substitute for histones in the chromatin of sperm during the haploid phase of spermatogenesis. They compact sperm DNA into a highly condensed, stable and inactive complex. The sequence is that of Sperm protamine alpha isoform 1 from Scomber scombrus (Atlantic mackerel).